Consider the following 205-residue polypeptide: Methylthioribulose-1-phosphate dehydratase (205 aa).

The Zn(2+) site is built by His-96 and His-98.

The protein belongs to the aldolase class II family. MtnB subfamily. Requires Zn(2+) as cofactor.

The catalysed reaction is 5-(methylsulfanyl)-D-ribulose 1-phosphate = 5-methylsulfanyl-2,3-dioxopentyl phosphate + H2O. The protein operates within amino-acid biosynthesis; L-methionine biosynthesis via salvage pathway; L-methionine from S-methyl-5-thio-alpha-D-ribose 1-phosphate: step 2/6. Its function is as follows. Catalyzes the dehydration of methylthioribulose-1-phosphate (MTRu-1-P) into 2,3-diketo-5-methylthiopentyl-1-phosphate (DK-MTP-1-P). In Pseudomonas aeruginosa (strain ATCC 15692 / DSM 22644 / CIP 104116 / JCM 14847 / LMG 12228 / 1C / PRS 101 / PAO1), this protein is Methylthioribulose-1-phosphate dehydratase.